The sequence spans 255 residues: NAD-dependent protein deacylase (255 aa).

The region spanning 1–252 (MPKLVVFSGA…AEIEQELEQF (252 aa)) is the Deacetylase sirtuin-type domain. Residue 9–28 (GAGLSAESGLETFRDNGGLW) participates in NAD(+) binding. Substrate is bound by residues Tyr53 and Arg56. 103 to 106 (QNVD) contributes to the NAD(+) binding site. His121 acts as the Proton acceptor in catalysis. Zn(2+) contacts are provided by Cys129, Cys132, Cys148, and Cys151. NAD(+) contacts are provided by residues 190–192 (GTS), 218–220 (NLQ), and Thr238.

This sequence belongs to the sirtuin family. Class III subfamily. Requires Zn(2+) as cofactor.

The protein localises to the cytoplasm. The enzyme catalyses N(6)-acetyl-L-lysyl-[protein] + NAD(+) + H2O = 2''-O-acetyl-ADP-D-ribose + nicotinamide + L-lysyl-[protein]. The catalysed reaction is N(6)-succinyl-L-lysyl-[protein] + NAD(+) + H2O = 2''-O-succinyl-ADP-D-ribose + nicotinamide + L-lysyl-[protein]. Its function is as follows. NAD-dependent lysine deacetylase and desuccinylase that specifically removes acetyl and succinyl groups on target proteins. Modulates the activities of several proteins which are inactive in their acylated form. The sequence is that of NAD-dependent protein deacylase from Helicobacter hepaticus (strain ATCC 51449 / 3B1).